Here is a 149-residue protein sequence, read N- to C-terminus: Prefoldin subunit alpha (149 aa).

It belongs to the prefoldin subunit alpha family. In terms of assembly, heterohexamer of two alpha and four beta subunits.

The protein resides in the cytoplasm. Its function is as follows. Molecular chaperone capable of stabilizing a range of proteins. Seems to fulfill an ATP-independent, HSP70-like function in archaeal de novo protein folding. This is Prefoldin subunit alpha from Methanospirillum hungatei JF-1 (strain ATCC 27890 / DSM 864 / NBRC 100397 / JF-1).